The sequence spans 428 residues: Forkhead box protein B2 (428 aa).

The fork-head DNA-binding region spans glutamine 12–leucine 103. Disordered regions lie at residues histidine 118–alanine 217 and proline 408–serine 428. Residues leucine 136–proline 163 are compositionally biased toward basic residues. 2 stretches are compositionally biased toward pro residues: residues proline 164–methionine 174 and alanine 183–proline 192. The segment covering serine 193–alanine 217 has biased composition (low complexity).

It localises to the nucleus. In terms of biological role, transcription factor. The chain is Forkhead box protein B2 (Foxb2) from Mus musculus (Mouse).